We begin with the raw amino-acid sequence, 248 residues long: MTESERTSHLDILYENQRGIMLCGVPYFSEKSLLNFDPAPWVDQHFVASPVSTKTATCPDPSWEWAWQRWYIDMSGDVDESGWQYGFSFTMNNWHGKPVSLHSFVRRRRWIRKRKKKELRRDELPLVPESFTISSSYPIQRSSTQTRSSFEDDSSDFDLSEVTTIPALLRALQDSRIDREKLEALATFLASASIDEKVYVKNCKKDLLKNFVFEHSCRKANELLNASLTAAEASTSQVALRESPTPQD.

Has a role in meiosis. The sequence is that of Meiotically up-regulated gene 65 protein (mug65) from Schizosaccharomyces pombe (strain 972 / ATCC 24843) (Fission yeast).